We begin with the raw amino-acid sequence, 346 residues long: Holliday junction branch migration complex subunit RuvB (346 aa).

Positions M1–Y183 are large ATPase domain (RuvB-L). ATP contacts are provided by residues I22, R23, G64, K67, T68, T69, E130–F132, R173, Y183, and R220. T68 is a binding site for Mg(2+). The segment at S184–K254 is small ATPAse domain (RuvB-S). Positions P257–F346 are head domain (RuvB-H). R293, R312, and R317 together coordinate DNA.

This sequence belongs to the RuvB family. In terms of assembly, homohexamer. Forms an RuvA(8)-RuvB(12)-Holliday junction (HJ) complex. HJ DNA is sandwiched between 2 RuvA tetramers; dsDNA enters through RuvA and exits via RuvB. An RuvB hexamer assembles on each DNA strand where it exits the tetramer. Each RuvB hexamer is contacted by two RuvA subunits (via domain III) on 2 adjacent RuvB subunits; this complex drives branch migration. In the full resolvosome a probable DNA-RuvA(4)-RuvB(12)-RuvC(2) complex forms which resolves the HJ.

It localises to the cytoplasm. It carries out the reaction ATP + H2O = ADP + phosphate + H(+). Its function is as follows. The RuvA-RuvB-RuvC complex processes Holliday junction (HJ) DNA during genetic recombination and DNA repair, while the RuvA-RuvB complex plays an important role in the rescue of blocked DNA replication forks via replication fork reversal (RFR). RuvA specifically binds to HJ cruciform DNA, conferring on it an open structure. The RuvB hexamer acts as an ATP-dependent pump, pulling dsDNA into and through the RuvAB complex. RuvB forms 2 homohexamers on either side of HJ DNA bound by 1 or 2 RuvA tetramers; 4 subunits per hexamer contact DNA at a time. Coordinated motions by a converter formed by DNA-disengaged RuvB subunits stimulates ATP hydrolysis and nucleotide exchange. Immobilization of the converter enables RuvB to convert the ATP-contained energy into a lever motion, pulling 2 nucleotides of DNA out of the RuvA tetramer per ATP hydrolyzed, thus driving DNA branch migration. The RuvB motors rotate together with the DNA substrate, which together with the progressing nucleotide cycle form the mechanistic basis for DNA recombination by continuous HJ branch migration. Branch migration allows RuvC to scan DNA until it finds its consensus sequence, where it cleaves and resolves cruciform DNA. The polypeptide is Holliday junction branch migration complex subunit RuvB (Xanthomonas axonopodis pv. citri (strain 306)).